Here is a 306-residue protein sequence, read N- to C-terminus: MNYEAEQPGANDDASGVAVALELARVLAKRKPAATIVFAAVAGEEQGLLGAQFMAQTFKNASVNVEGMLNVDLVGSSVGSRGEKEPNTVRLFCQGPPLTETPAQASQRLSIGGENDSPARQLGRFITEVAANKFTDMRVAMIYRLDRFLRGGDHRPFLEAGYAAVRFTEPNENFDHQHQDTRVEDGVQYGDLPEFLDYEYIARVAKVDLAAMWSLANAPAKVNNVRVNGTWLSNDSQLFWDPVNSTNLAGYEVVWRPTDAPLWTHALFVGDVRTATVELSKDNVIFGVRSVGKNGYKSPVTIPFPT.

Positions 1–28 (MNYEAEQPGANDDASGVAVALELARVLA) are cleaved as a signal peptide. Asp12 and Glu45 together coordinate Zn(2+). Asn60 is a glycosylation site (N-linked (GlcNAc...) asparagine). Asp72 lines the Zn(2+) pocket. Residues 218–306 (APAKVNNVRV…KSPVTIPFPT (89 aa)) form the Fibronectin type-III domain. Asn228, Asn234, and Asn244 each carry an N-linked (GlcNAc...) asparagine glycan.

The protein belongs to the peptidase M28 family. M28B subfamily. Requires Zn(2+) as cofactor.

It localises to the secreted. This Verticillium alfalfae (strain VaMs.102 / ATCC MYA-4576 / FGSC 10136) (Verticillium wilt of alfalfa) protein is Probable zinc metalloprotease VDBG_06923.